The primary structure comprises 2286 residues: DNA polymerase epsilon catalytic subunit A (2286 aa).

The interval 1–30 (MSLRSGGRRRADPGADGEASRDDGATSSVS) is disordered. Basic and acidic residues predominate over residues 9–24 (RRADPGADGEASRDDG). Phosphoserine is present on residues Ser-1184, Ser-1297, Ser-1317, and Ser-1940. The segment at 1939–1969 (DSQKAGGAEDEQENEDDEEERDGEEEEEAEE) is disordered. Residues 1946 to 1969 (AEDEQENEDDEEERDGEEEEEAEE) show a composition bias toward acidic residues. Residues Cys-2158, Cys-2161, Cys-2187, and Cys-2190 each contribute to the Zn(2+) site. A CysA-type zinc finger spans residues 2158-2190 (CRSCNFCRDLDLCKDSSFSEDGAVLPQWLCSNC). Residues Cys-2221, Cys-2224, Cys-2236, and Cys-2238 each coordinate [4Fe-4S] cluster. The CysB motif signature appears at 2221–2238 (CLKCRGVKETSMPVYCSC).

It belongs to the DNA polymerase type-B family. Component of the DNA polymerase epsilon complex consisting of four subunits: the catalytic subunit POLE and the accessory subunits POLE2, POLE3 and POLE4. Interacts with RAD17 and TOPBP1.

Its subcellular location is the nucleus. The enzyme catalyses DNA(n) + a 2'-deoxyribonucleoside 5'-triphosphate = DNA(n+1) + diphosphate. Catalytic component of the DNA polymerase epsilon complex. Participates in chromosomal DNA replication. Required during synthesis of the leading DNA strands at the replication fork, binds at/or near replication origins and moves along DNA with the replication fork. Has 3'-5' proofreading exonuclease activity that corrects errors arising during DNA replication. Involved in DNA synthesis during DNA repair. Along with DNA polymerase POLD1 and DNA polymerase POLK, has a role in excision repair (NER) synthesis following UV irradiation. This is DNA polymerase epsilon catalytic subunit A from Homo sapiens (Human).